The sequence spans 176 residues: ATP-dependent protease subunit HslV (176 aa).

Residue threonine 2 is part of the active site. 3 residues coordinate Na(+): glycine 157, cysteine 160, and threonine 163.

Belongs to the peptidase T1B family. HslV subfamily. In terms of assembly, a double ring-shaped homohexamer of HslV is capped on each side by a ring-shaped HslU homohexamer. The assembly of the HslU/HslV complex is dependent on binding of ATP.

It localises to the cytoplasm. The enzyme catalyses ATP-dependent cleavage of peptide bonds with broad specificity.. Allosterically activated by HslU binding. Its function is as follows. Protease subunit of a proteasome-like degradation complex believed to be a general protein degrading machinery. The chain is ATP-dependent protease subunit HslV from Proteus mirabilis (strain HI4320).